We begin with the raw amino-acid sequence, 448 residues long: Protein arginine N-methyltransferase 2 (448 aa).

2 interaction with ESR1 regions span residues 1-289 and 145-287; these read MEAP…SALK and KESL…NLSA. The SH3 domain maps to 42–101; sequence LQPEEFVAIADYTATDETQLSFLRGEKILILRQTTADWWWGERAGCCGYIPANHLGKQLE. R73 and R84 each carry asymmetric dimethylarginine. The interaction with RB1 stretch occupies residues 95–219; the sequence is HLGKQLEEYD…DVVLPEKVDV (125 aa). Residues 111–414 enclose the SAM-dependent MTase PRMT-type domain; that stretch reads DEEYFDSYGT…CCVTKKSGME (304 aa). S-adenosyl-L-methionine-binding residues include H124, R133, G157, E180, and E209. Residues E223 and E232 contribute to the active site.

It belongs to the class I-like SAM-binding methyltransferase superfamily. Protein arginine N-methyltransferase family. In terms of assembly, self-associates. Interacts with HNRNPUL1. Interacts with NFKBIA. Interacts with NCOA6 coactivator. Interacts (via SH3 domain) with PRMT8. Interacts with AR. Interacts with ESR1, ESR2, PGR, PPARG, RARA, RXRA and THRB. Interacts with RB1 and E2F1. Expressed in liver, pancreas, lung, brain, skeletal muscle, heart, muscle and fat.

It localises to the cytoplasm. The protein resides in the nucleus. The enzyme catalyses L-arginyl-[protein] + 2 S-adenosyl-L-methionine = N(omega),N(omega)-dimethyl-L-arginyl-[protein] + 2 S-adenosyl-L-homocysteine + 2 H(+). Its function is as follows. Arginine methyltransferase that methylates the guanidino nitrogens of arginyl residues in proteins such as STAT3, FBL, histone H4. May inhibit NF-kappa-B transcription, and promote apoptosis. Represses E2F1 transcriptional activity (in a RB1-dependent manner). Has a negative regulation effect on G1 to S transition of mitotic cell cycle. Involved in growth regulation. Acts as a coactivator (with NCOA2) of the androgen receptor (AR)-mediated transactivation. Acts as a coactivator (with estrogen) of estrogen receptor (ER)-mediated transactivation. Enhances PGR, PPARG, RARA-mediated transactivation. The protein is Protein arginine N-methyltransferase 2 (Prmt2) of Mus musculus (Mouse).